We begin with the raw amino-acid sequence, 169 residues long: E1B protein, small T-antigen (169 aa).

The protein belongs to the adenoviridae E1B 19 kDa protein family.

In Canine adenovirus serotype 1 (strain CLL) (CAdV-1), this protein is E1B protein, small T-antigen.